The primary structure comprises 208 residues: FMN-dependent NADH:quinone oxidoreductase 1 (208 aa).

Serine 10 contributes to the FMN binding site.

Belongs to the azoreductase type 1 family. As to quaternary structure, homodimer. Requires FMN as cofactor.

It catalyses the reaction 2 a quinone + NADH + H(+) = 2 a 1,4-benzosemiquinone + NAD(+). It carries out the reaction N,N-dimethyl-1,4-phenylenediamine + anthranilate + 2 NAD(+) = 2-(4-dimethylaminophenyl)diazenylbenzoate + 2 NADH + 2 H(+). Quinone reductase that provides resistance to thiol-specific stress caused by electrophilic quinones. Contributes to resistance to 2-methylhydroquinone (2-MHQ) and catechol. In terms of biological role, also exhibits azoreductase activity. Catalyzes the reductive cleavage of the azo bond in aromatic azo compounds to the corresponding amines. This is FMN-dependent NADH:quinone oxidoreductase 1 from Bacillus subtilis (strain 168).